The chain runs to 283 residues: RNase adapter protein RapZ (283 aa).

Gly-8–Ser-15 is an ATP binding site. Asp-56 to Asn-59 provides a ligand contact to GTP. Residues Arg-266–Lys-283 form an RNA-binding region.

The protein belongs to the RapZ-like family. RapZ subfamily. As to quaternary structure, homotrimer.

Its function is as follows. Modulates the synthesis of GlmS, by affecting the processing and stability of the regulatory small RNA GlmZ. When glucosamine-6-phosphate (GlcN6P) concentrations are high in the cell, RapZ binds GlmZ and targets it to cleavage by RNase E. Consequently, GlmZ is inactivated and unable to activate GlmS synthesis. Under low GlcN6P concentrations, RapZ is sequestered and inactivated by an other regulatory small RNA, GlmY, preventing GlmZ degradation and leading to synthesis of GlmS. The protein is RNase adapter protein RapZ of Yersinia enterocolitica serotype O:8 / biotype 1B (strain NCTC 13174 / 8081).